A 176-amino-acid polypeptide reads, in one-letter code: MDYFTLFGLPARYQLDTQALSLRFQDLQRQYHPDKFASGSQAEQLAAVQQSATINQAWQTLRHPLMRAEYLLSLHGFDLASEQHTVRDTAFLMEQLELREELDEIEQAKDEARLESFIKRVKKMFDTRHQLMVEQLDNETWDAAADTVRKLRFLDKLRSSAEQLEEKLLDFLISGS.

The J domain maps to 2–74; sequence DYFTLFGLPA…LMRAEYLLSL (73 aa).

It belongs to the HscB family. As to quaternary structure, interacts with HscA and stimulates its ATPase activity. Interacts with IscU.

In terms of biological role, co-chaperone involved in the maturation of iron-sulfur cluster-containing proteins. Seems to help targeting proteins to be folded toward HscA. This is Co-chaperone protein HscB from Escherichia coli O7:K1 (strain IAI39 / ExPEC).